Consider the following 181-residue polypeptide: Large ribosomal subunit protein uL5 (181 aa).

This sequence belongs to the universal ribosomal protein uL5 family. Part of the 50S ribosomal subunit; part of the 5S rRNA/L5/L18/L25 subcomplex. Contacts the 5S rRNA and the P site tRNA. Forms a bridge to the 30S subunit in the 70S ribosome.

In terms of biological role, this is one of the proteins that bind and probably mediate the attachment of the 5S RNA into the large ribosomal subunit, where it forms part of the central protuberance. In the 70S ribosome it contacts protein S13 of the 30S subunit (bridge B1b), connecting the 2 subunits; this bridge is implicated in subunit movement. Contacts the P site tRNA; the 5S rRNA and some of its associated proteins might help stabilize positioning of ribosome-bound tRNAs. This chain is Large ribosomal subunit protein uL5, found in Thermosipho africanus (strain TCF52B).